The chain runs to 330 residues: Malate dehydrogenase (330 aa).

13 to 19 (GAAGQIG) serves as a coordination point for NAD(+). The substrate site is built by arginine 94 and arginine 100. NAD(+)-binding positions include asparagine 107, glutamine 114, and 131 to 133 (VGN). The substrate site is built by asparagine 133 and arginine 164. The active-site Proton acceptor is the histidine 189.

Belongs to the LDH/MDH superfamily. MDH type 2 family.

The catalysed reaction is (S)-malate + NAD(+) = oxaloacetate + NADH + H(+). Functionally, catalyzes the reversible oxidation of malate to oxaloacetate. The chain is Malate dehydrogenase from Deinococcus radiodurans (strain ATCC 13939 / DSM 20539 / JCM 16871 / CCUG 27074 / LMG 4051 / NBRC 15346 / NCIMB 9279 / VKM B-1422 / R1).